Here is a 430-residue protein sequence, read N- to C-terminus: NADH-quinone oxidoreductase subunit D 1 (430 aa).

The interval 1–36 is disordered; sequence MSEAKGVGGIDPRATPGSAGAGERPPMGTVSRAGDG.

The protein belongs to the complex I 49 kDa subunit family. In terms of assembly, NDH-1 is composed of 14 different subunits. Subunits NuoB, C, D, E, F, and G constitute the peripheral sector of the complex.

Its subcellular location is the cell inner membrane. It catalyses the reaction a quinone + NADH + 5 H(+)(in) = a quinol + NAD(+) + 4 H(+)(out). Its function is as follows. NDH-1 shuttles electrons from NADH, via FMN and iron-sulfur (Fe-S) centers, to quinones in the respiratory chain. The immediate electron acceptor for the enzyme in this species is believed to be ubiquinone. Couples the redox reaction to proton translocation (for every two electrons transferred, four hydrogen ions are translocated across the cytoplasmic membrane), and thus conserves the redox energy in a proton gradient. This chain is NADH-quinone oxidoreductase subunit D 1, found in Anaeromyxobacter dehalogenans (strain 2CP-C).